The sequence spans 378 residues: Ribosomal RNA large subunit methyltransferase G (378 aa).

Belongs to the methyltransferase superfamily. RlmG family.

It localises to the cytoplasm. It catalyses the reaction guanosine(1835) in 23S rRNA + S-adenosyl-L-methionine = N(2)-methylguanosine(1835) in 23S rRNA + S-adenosyl-L-homocysteine + H(+). In terms of biological role, specifically methylates the guanine in position 1835 (m2G1835) of 23S rRNA. The protein is Ribosomal RNA large subunit methyltransferase G of Salmonella agona (strain SL483).